The primary structure comprises 123 residues: Omega-oxotoxin-Ot1a (123 aa).

An N-terminal signal peptide occupies residues 1 to 16 (MKIVLVFVCTLYLAQA). The propeptide occupies 17–54 (TYLSEQDVNEVSEFLEALDQANEAASEMVEAAETEEAR). Residues 55-122 (DWECLPLHSS…GKINTCDKYK (68 aa)) form the Oxytoxin-type inhibitor cystine knot (ICK) domain. Intrachain disulfides connect cysteine 58–cysteine 72, cysteine 65–cysteine 77, cysteine 69–cysteine 118, cysteine 71–cysteine 106, and cysteine 79–cysteine 104.

This sequence belongs to the spiderine family. Spiderine subfamily. Mass spectrometry data suggest a carboxylated free C-terminal residue. In terms of tissue distribution, expressed by the venom gland.

The protein localises to the secreted. Functionally, weak blocker of vertebrate P/Q-, N- and L-type voltage-gated calcium channels (Cav1 and Cav2). Is both paralytic and lethal when injected into lepidopteran larvae. Is not toxic to mice. This is Omega-oxotoxin-Ot1a from Oxyopes takobius (Lynx spider).